The primary structure comprises 307 residues: MNHATSELHDESAVTSVPETTRLQDLKALVKMGIVNSNTLTVFTGFWLALHFNGLSVMDNLDKLFFTIVGSGLVMAGVCCLNNYIDRDIDPLMERTKTRPTVTGKYKPGFALTFGLVILLLGFVFLLLTTPMAVLMGFIGAFTYVVLYSLWTKRKYTLNTVVGSISGAVPPLIGWAAIDPSLGHPIAWMLFLIMFIWQIPHFLALAMKRVDEYRNAGIPMLPVVHGFEITKRQIMIWTVCLLPLPFYMSGLGITFMVIATLLNIGWIVLGFYGFRKKDDIKWSVQMFVYSLNYLTILFVSMIVVTFF.

Helical transmembrane passes span 32-52, 65-85, 108-128, 131-151, 158-178, 186-206, 251-271, and 287-307; these read MGIV…ALHF, FFTI…NNYI, PGFA…FLLL, PMAV…YSLW, LNTV…WAAI, IAWM…LALA, LGIT…VLGF, and FVYS…VTFF.

This sequence belongs to the UbiA prenyltransferase family. Protoheme IX farnesyltransferase subfamily. As to quaternary structure, interacts with CtaA.

The protein localises to the cell membrane. The catalysed reaction is heme b + (2E,6E)-farnesyl diphosphate + H2O = Fe(II)-heme o + diphosphate. It participates in porphyrin-containing compound metabolism; heme O biosynthesis; heme O from protoheme: step 1/1. Its function is as follows. Converts heme B (protoheme IX) to heme O by substitution of the vinyl group on carbon 2 of heme B porphyrin ring with a hydroxyethyl farnesyl side group. This Bacillus cereus (strain ATCC 10987 / NRS 248) protein is Protoheme IX farnesyltransferase.